A 158-amino-acid polypeptide reads, in one-letter code: Transcriptional regulator MraZ (158 aa).

2 SpoVT-AbrB domains span residues 7–57 (THQN…PTAA) and 86–129 (AYPV…EPAA). The tract at residues 133 to 158 (RRAEARTRSRQLALPAQGRRQGGADA) is disordered.

This sequence belongs to the MraZ family. Forms oligomers.

The protein resides in the cytoplasm. Its subcellular location is the nucleoid. In Gluconacetobacter diazotrophicus (strain ATCC 49037 / DSM 5601 / CCUG 37298 / CIP 103539 / LMG 7603 / PAl5), this protein is Transcriptional regulator MraZ.